A 360-amino-acid chain; its full sequence is Histidinol-phosphate aminotransferase 2 (360 aa).

K218 carries the N6-(pyridoxal phosphate)lysine modification.

This sequence belongs to the class-II pyridoxal-phosphate-dependent aminotransferase family. Histidinol-phosphate aminotransferase subfamily. As to quaternary structure, homodimer. The cofactor is pyridoxal 5'-phosphate.

It carries out the reaction L-histidinol phosphate + 2-oxoglutarate = 3-(imidazol-4-yl)-2-oxopropyl phosphate + L-glutamate. It participates in amino-acid biosynthesis; L-histidine biosynthesis; L-histidine from 5-phospho-alpha-D-ribose 1-diphosphate: step 7/9. The sequence is that of Histidinol-phosphate aminotransferase 2 from Nitrosococcus oceani (strain ATCC 19707 / BCRC 17464 / JCM 30415 / NCIMB 11848 / C-107).